The following is a 340-amino-acid chain: Tryptophan--tRNA ligase (340 aa).

Residues 11–13 (RPT) and 19–20 (GH) contribute to the ATP site. The 'HIGH' region motif lies at 12-20 (PTGKLHLGH). L-tryptophan is bound at residue D140. ATP-binding positions include 152–154 (GND), L194, and 202–206 (KMSKS). Residues 202–206 (KMSKS) carry the 'KMSKS' region motif.

This sequence belongs to the class-I aminoacyl-tRNA synthetase family. Homodimer.

The protein localises to the cytoplasm. The catalysed reaction is tRNA(Trp) + L-tryptophan + ATP = L-tryptophyl-tRNA(Trp) + AMP + diphosphate + H(+). Catalyzes the attachment of tryptophan to tRNA(Trp). The chain is Tryptophan--tRNA ligase from Streptococcus pyogenes serotype M3 (strain ATCC BAA-595 / MGAS315).